A 147-amino-acid polypeptide reads, in one-letter code: Hemoglobin subunit beta (147 aa).

Valine 2 carries the N-acetylvaline modification. The Globin domain maps to 3–147 (HLTAEEKSAV…VANALAHKYH (145 aa)). Threonine 13 is subject to Phosphothreonine. Serine 45 carries the phosphoserine modification. Lysine 60 carries the N6-acetyllysine modification. Residue histidine 64 participates in heme b binding. The residue at position 83 (lysine 83) is an N6-acetyllysine. A heme b-binding site is contributed by histidine 93. Residue cysteine 94 is modified to S-nitrosocysteine. At lysine 145 the chain carries N6-acetyllysine.

The protein belongs to the globin family. As to quaternary structure, heterotetramer of two alpha chains and two beta chains. As to expression, red blood cells.

Functionally, involved in oxygen transport from the lung to the various peripheral tissues. The chain is Hemoglobin subunit beta (HBB) from Sapajus apella (Brown-capped capuchin).